We begin with the raw amino-acid sequence, 181 residues long: Reverse rubrerythrin-1 (181 aa).

The 35-residue stretch at 1-35 folds into the Rubredoxin-like domain; the sequence is MKKFKCVVCGYIYTGEDAPEKCPVCGAGKDKFVEV. Positions 6, 9, 22, 25, 69, 102, 132, 165, and 168 each coordinate Fe cation. The region spanning 52-181 is the Ferritin-like diiron domain; sequence KGVDKEVLEG…FRGLLNRYFK (130 aa).

In terms of assembly, homodimer. Fe(3+) serves as cofactor.

The enzyme catalyses H2O2 + NADH + H(+) = NAD(+) + 2 H2O. Functionally, functions as the terminal component of an NADH peroxidase (NADH:H(2)O(2) oxidoreductase) when using NADH:rubredoxin oxidoreductase (NROR) and rubredoxin (Rd) as electron transport intermediaries from NADH to revRbr 1. Plays an important role in the oxidative stress defense system in C.acetobutylicum, an obligate anaerobic bacterium. Also exhibits NADH oxidase (NADH:O(2) oxidoreductase) activity in vitro, which is 100-fold lesser than that of FprA1/2 using the same electron transfer components. Therefore, its predominant function is most likely as a scavenger of its preferred substrate, H(2)O(2). The protein is Reverse rubrerythrin-1 (rbr3A) of Clostridium acetobutylicum (strain ATCC 824 / DSM 792 / JCM 1419 / IAM 19013 / LMG 5710 / NBRC 13948 / NRRL B-527 / VKM B-1787 / 2291 / W).